The sequence spans 400 residues: Elongation factor Tu (400 aa).

The 201-residue stretch at 10 to 210 (KPHVNVGTIG…ALDSYIPEPV (201 aa)) folds into the tr-type G domain. Positions 19 to 26 (GHVDHGKT) are G1. 19–26 (GHVDHGKT) is a binding site for GTP. Thr-26 serves as a coordination point for Mg(2+). The interval 66-70 (ILTIA) is G2. Residues 87–90 (DCPG) form a G3 region. Residues 87–91 (DCPGH) and 142–145 (NKCD) contribute to the GTP site. The interval 142 to 145 (NKCD) is G4. Positions 180-182 (SAI) are G5.

It belongs to the TRAFAC class translation factor GTPase superfamily. Classic translation factor GTPase family. EF-Tu/EF-1A subfamily. Monomer.

It is found in the cytoplasm. It carries out the reaction GTP + H2O = GDP + phosphate + H(+). GTP hydrolase that promotes the GTP-dependent binding of aminoacyl-tRNA to the A-site of ribosomes during protein biosynthesis. This Gemmatimonas aurantiaca (strain DSM 14586 / JCM 11422 / NBRC 100505 / T-27) protein is Elongation factor Tu.